We begin with the raw amino-acid sequence, 406 residues long: MEEPLGSPPAALSALEKNVAELTVMDVYDIASLVGHEFERVIDQHGCESIARLMPKVVRVLEILEVLVSRHHVAPELDELRLELDRLRVERMDRIEKERKHQKELELVEDVWRGEAQDLLSQIAQLQEENKQLMTNLNHKDVGFSEEEFQKQEGMSERERQVMKRLKEVVDKQRDELRAKDRELGLKNEDVEALQQQQTRLMKINHDLRHRVTVVEAQGKALIEQKVELEADLQTKEQEMGSLRAELGKLRERLQGEHSQNGEEEEAEIQPQPDGEESISDAEKAALDLKDPNRPRFTLQELRDVLHERNELKSKVFLLQEELAYYKSEEIEEENRIPQPPPITHPRTSPQPESGIKRLFSFFSRDKKRLANTQRPTHIHESFGQWAITQRDDGYTEQGQEALQHL.

The residue at position 7 (serine 7) is a Phosphoserine. One can recognise an RH1 domain in the interval 10–97 (AALSALEKNV…RVERMDRIEK (88 aa)). Cysteine 47 bears the S-nitrosocysteine mark. Residues 76–258 (ELDELRLELD…KLRERLQGEH (183 aa)) are a coiled coil. Disordered regions lie at residues 255–280 (QGEH…ESIS) and 330–354 (EIEE…QPES). Phosphoserine is present on serine 259. Residues 262 to 280 (GEEEEAEIQPQPDGEESIS) show a composition bias toward acidic residues. One can recognise an RH2 domain in the interval 294–359 (RPRFTLQELR…PQPESGIKRL (66 aa)).

The protein belongs to the RILPL family. As to quaternary structure, interacts (when S-nitrosylated) with GAPDH. Interacts with RAB8A; interaction is dependent on the phosphorylation of 'Thr-72' of RAB8A. Interacts with RAB10 and RAB12; the interaction is dependent on the phosphorylation of 'Thr-73' of RAB10, and 'Ser-105' of RAB12. Post-translationally, S-nitrosylation is required for the interaction with GAPDH.

The protein resides in the cytoplasm. The protein localises to the cytosol. Its subcellular location is the cell projection. It localises to the cilium. It is found in the cytoskeleton. The protein resides in the microtubule organizing center. The protein localises to the centrosome. Its subcellular location is the centriole. Its function is as follows. Neuroprotective protein, which acts by sequestring GAPDH in the cytosol and prevent the apoptotic function of GAPDH in the nucleus. Competes with SIAH1 for binding GAPDH. Does not regulate lysosomal morphology and distribution. Plays a role in the regulation of cell shape and polarity. Plays a role in cellular protein transport, including protein transport away from primary cilia. Binds to RAB10 following LRRK2-mediated RAB10 phosphorylation which leads to inhibition of ciliogenesis. This is RILP-like protein 1 (Rilpl1) from Mus musculus (Mouse).